A 481-amino-acid polypeptide reads, in one-letter code: Two-component response regulator ORR32 (481 aa).

A Response regulatory domain is found at 13 to 138 (HVMLVDDDTK…TIALWRVVAW (126 aa)). Aspartate 66 is modified (4-aspartylphosphate).

It belongs to the ARR family. Type-B subfamily. In terms of processing, two-component system major event consists of a His-to-Asp phosphorelay between a sensor histidine kinase (HK) and a response regulator (RR). In plants, the His-to-Asp phosphorelay involves an additional intermediate named Histidine-containing phosphotransfer protein (HPt). This multistep phosphorelay consists of a His-Asp-His-Asp sequential transfer of a phosphate group between first a His and an Asp of the HK protein, followed by the transfer to a conserved His of the HPt protein and finally the transfer to an Asp in the receiver domain of the RR protein.

In terms of biological role, functions as a response regulator involved in His-to-Asp phosphorelay signal transduction system. Phosphorylation of the Asp residue in the receiver domain activates the ability of the protein to promote the transcription of target genes. May directly activate some type-A response regulators in response to cytokinins. The chain is Two-component response regulator ORR32 from Oryza sativa subsp. japonica (Rice).